The following is a 337-amino-acid chain: Phosphate acyltransferase (337 aa).

This sequence belongs to the PlsX family. As to quaternary structure, homodimer. Probably interacts with PlsY.

The protein localises to the cytoplasm. It carries out the reaction a fatty acyl-[ACP] + phosphate = an acyl phosphate + holo-[ACP]. It participates in lipid metabolism; phospholipid metabolism. In terms of biological role, catalyzes the reversible formation of acyl-phosphate (acyl-PO(4)) from acyl-[acyl-carrier-protein] (acyl-ACP). This enzyme utilizes acyl-ACP as fatty acyl donor, but not acyl-CoA. This chain is Phosphate acyltransferase, found in Hydrogenovibrio crunogenus (strain DSM 25203 / XCL-2) (Thiomicrospira crunogena).